The following is a 302-amino-acid chain: Putative gluconeogenesis factor (302 aa).

This sequence belongs to the gluconeogenesis factor family.

The protein resides in the cytoplasm. Required for morphogenesis under gluconeogenic growth conditions. The protein is Putative gluconeogenesis factor (ybhK) of Salmonella typhimurium (strain LT2 / SGSC1412 / ATCC 700720).